The primary structure comprises 292 residues: ATP synthase gamma chain (292 aa).

It belongs to the ATPase gamma chain family. In terms of assembly, F-type ATPases have 2 components, CF(1) - the catalytic core - and CF(0) - the membrane proton channel. CF(1) has five subunits: alpha(3), beta(3), gamma(1), delta(1), epsilon(1). CF(0) has three main subunits: a, b and c.

The protein resides in the cell inner membrane. Produces ATP from ADP in the presence of a proton gradient across the membrane. The gamma chain is believed to be important in regulating ATPase activity and the flow of protons through the CF(0) complex. In Nitrobacter winogradskyi (strain ATCC 25391 / DSM 10237 / CIP 104748 / NCIMB 11846 / Nb-255), this protein is ATP synthase gamma chain.